We begin with the raw amino-acid sequence, 179 residues long: Probable mitochondrial import inner membrane translocase subunit Tim17 1 (179 aa).

3 consecutive transmembrane segments (helical) span residues 17 to 37, 61 to 81, and 113 to 133; these read CGGA…IKGF, LVGG…CSLV, and LSSA…GIVV.

It belongs to the Tim17/Tim22/Tim23 family. Component of the TIM23 complex at least composed of Tim23, Tim17 (Tim17a1, Tim17a2 or Tim17b1) and a Tim50. The complex interacts with the Tim44 component of the PAM complex.

Its subcellular location is the mitochondrion inner membrane. In terms of biological role, essential component of the TIM23 complex, a complex that mediates the translocation of transit peptide-containing proteins across the mitochondrial inner membrane. This is Probable mitochondrial import inner membrane translocase subunit Tim17 1 (Tim17b1) from Drosophila melanogaster (Fruit fly).